The chain runs to 154 residues: H/ACA ribonucleoprotein complex subunit nhp2 (154 aa).

Residue Ser-119 is modified to Phosphoserine.

It belongs to the eukaryotic ribosomal protein eL8 family. Component of the small nucleolar ribonucleoprotein particles containing H/ACA-type snoRNAs (H/ACA snoRNPs).

It localises to the nucleus. It is found in the nucleolus. Functionally, non-catalytic component of the H/ACA small nucleolar ribonucleoprotein (H/ACA snoRNP), which catalyzes pseudouridylation of rRNA and is required for ribosome biogenesis. This involves the isomerization of uridine such that the ribose is subsequently attached to C5, instead of the normal N1. Pseudouridine ('psi') residues may serve to stabilize the conformation of rRNAs. The H/ACA snoRNP complex also mediates pseudouridylation of other types of RNAs. The H/ACA snoRNP complex mediates pseudouridylation at position 93 in U2 snRNA. Directly binds H/ACA snoRNAs. In Schizosaccharomyces pombe (strain 972 / ATCC 24843) (Fission yeast), this protein is H/ACA ribonucleoprotein complex subunit nhp2 (nhp2).